We begin with the raw amino-acid sequence, 92 residues long: N(2)-fixation sustaining protein CowN (92 aa).

Belongs to the CowN family.

Is required to sustain N(2)-dependent growth in the presence of low levels of carbon monoxide (CO). Probably acts by protecting the N(2) fixation ability of the nitrogenase complex, which is inactivated in the presence of CO. This chain is N(2)-fixation sustaining protein CowN, found in Rhodopseudomonas palustris (strain BisB18).